We begin with the raw amino-acid sequence, 142 residues long: Transcriptional regulator MraZ (142 aa).

2 consecutive SpoVT-AbrB domains span residues 5 to 47 (THTP…PTPE) and 76 to 119 (AHDE…DRVA).

The protein belongs to the MraZ family. As to quaternary structure, forms oligomers.

The protein localises to the cytoplasm. The protein resides in the nucleoid. The sequence is that of Transcriptional regulator MraZ from Salinispora tropica (strain ATCC BAA-916 / DSM 44818 / JCM 13857 / NBRC 105044 / CNB-440).